Here is a 953-residue protein sequence, read N- to C-terminus: Translation initiation factor IF-2 (953 aa).

Disordered stretches follow at residues 48–240 (SSFS…AQQE) and 279–363 (TKLK…TERK). Composition is skewed to basic and acidic residues over residues 80–89 (TGSEHVEKTQ), 98–111 (FKAE…EQAA), and 140–188 (QGDK…ENHK). Polar residues predominate over residues 191–207 (RFTNQKKQGRQEPQSKS). Basic and acidic residues predominate over residues 229-240 (RQSETRFRAQQE). A compositionally biased stretch (polar residues) spans 282-291 (KSSNISAKST). The segment covering 300–317 (ARPEKNRELTHHSQEGQK) has biased composition (basic and acidic residues). Positions 322 to 338 (SWNSQNQVRNQKNSNWN) are enriched in low complexity. The span at 339 to 348 (KNKKTKKGKN) shows a compositional bias: basic residues. The region spanning 454-623 (ERAPVVTIMG…LLVAEVEELK (170 aa)) is the tr-type G domain. Residues 463-470 (GHVDHGKT) are G1. 463–470 (GHVDHGKT) lines the GTP pocket. The segment at 488–492 (GITQH) is G2. Residues 509–512 (DTPG) are G3. GTP is bound by residues 509 to 513 (DTPGH) and 563 to 566 (NKID). The interval 563 to 566 (NKID) is G4. The G5 stretch occupies residues 599 to 601 (SAK).

The protein belongs to the TRAFAC class translation factor GTPase superfamily. Classic translation factor GTPase family. IF-2 subfamily.

The protein resides in the cytoplasm. In terms of biological role, one of the essential components for the initiation of protein synthesis. Protects formylmethionyl-tRNA from spontaneous hydrolysis and promotes its binding to the 30S ribosomal subunits. Also involved in the hydrolysis of GTP during the formation of the 70S ribosomal complex. This chain is Translation initiation factor IF-2, found in Streptococcus pyogenes serotype M1.